A 602-amino-acid polypeptide reads, in one-letter code: 4-hydroxy-3-methylbut-2-en-1-yl diphosphate synthase (flavodoxin) (602 aa).

Cys508, Cys511, Cys543, and Glu550 together coordinate [4Fe-4S] cluster.

It belongs to the IspG family. [4Fe-4S] cluster serves as cofactor.

The enzyme catalyses (2E)-4-hydroxy-3-methylbut-2-enyl diphosphate + oxidized [flavodoxin] + H2O + 2 H(+) = 2-C-methyl-D-erythritol 2,4-cyclic diphosphate + reduced [flavodoxin]. It participates in isoprenoid biosynthesis; isopentenyl diphosphate biosynthesis via DXP pathway; isopentenyl diphosphate from 1-deoxy-D-xylulose 5-phosphate: step 5/6. Converts 2C-methyl-D-erythritol 2,4-cyclodiphosphate (ME-2,4cPP) into 1-hydroxy-2-methyl-2-(E)-butenyl 4-diphosphate. This chain is 4-hydroxy-3-methylbut-2-en-1-yl diphosphate synthase (flavodoxin), found in Chlamydia trachomatis serovar D (strain ATCC VR-885 / DSM 19411 / UW-3/Cx).